A 372-amino-acid polypeptide reads, in one-letter code: MEDIRVLIVDDSALMRNLIGKIVDATPGLKIADKAMNGRFALQKLERVAPDVIVLDLEMPEMNGIEFLRELKKQNIKIPVVILSSIAKEGAKVTMDCLELGACDFITKPSGSESANLTTVSETLSKMLLAYGRRHQIETGTRSTDTTNSFSEPFKSTIPKPMTAAEPQKEEKPTPQREHGNIQIIAIGISTGGPNALRQVFASIDKDLPQPIVVVQHMPPGFTKEFALSLDKICPLEVKEAEDGDLIKPGRILIAPGGKHLVVEKRSLAAVAKVIDTEPQSGHKPSVDVLFGSVAKEYQNHALGIIMTGMGKDGAENITKLYTEGSRTIGQDEGSSVVYGMPRVAWEMGGVMEQVSLDNMAAAINRYGKEFA.

Residues 5-123 (RVLIVDDSAL…SANLTTVSET (119 aa)) enclose the Response regulatory domain. D56 is modified (4-aspartylphosphate). Polar residues predominate over residues 140–151 (GTRSTDTTNSFS). Positions 140 to 177 (GTRSTDTTNSFSEPFKSTIPKPMTAAEPQKEEKPTPQR) are disordered. Residues 167-177 (PQKEEKPTPQR) show a composition bias toward basic and acidic residues. In terms of domain architecture, CheB-type methylesterase spans 178–364 (EHGNIQIIAI…VSLDNMAAAI (187 aa)). Catalysis depends on residues S190, H217, and D313.

Belongs to the CheB family. In terms of processing, phosphorylated by CheA. Phosphorylation of the N-terminal regulatory domain activates the methylesterase activity.

The protein localises to the cytoplasm. It carries out the reaction [protein]-L-glutamate 5-O-methyl ester + H2O = L-glutamyl-[protein] + methanol + H(+). It catalyses the reaction L-glutaminyl-[protein] + H2O = L-glutamyl-[protein] + NH4(+). Involved in chemotaxis. Part of a chemotaxis signal transduction system that modulates chemotaxis in response to various stimuli. Catalyzes the demethylation of specific methylglutamate residues introduced into the chemoreceptors (methyl-accepting chemotaxis proteins or MCP) by CheR. Also mediates the irreversible deamidation of specific glutamine residues to glutamic acid. The protein is Protein-glutamate methylesterase/protein-glutamine glutaminase of Treponema denticola (strain ATCC 35405 / DSM 14222 / CIP 103919 / JCM 8153 / KCTC 15104).